The chain runs to 187 residues: UPF0301 protein ECA3925 (187 aa).

The protein belongs to the UPF0301 (AlgH) family.

This Pectobacterium atrosepticum (strain SCRI 1043 / ATCC BAA-672) (Erwinia carotovora subsp. atroseptica) protein is UPF0301 protein ECA3925.